Here is a 106-residue protein sequence, read N- to C-terminus: Iron-sulfur cluster assembly protein CyaY (106 aa).

Belongs to the frataxin family.

Involved in iron-sulfur (Fe-S) cluster assembly. May act as a regulator of Fe-S biogenesis. The sequence is that of Iron-sulfur cluster assembly protein CyaY from Escherichia coli O7:K1 (strain IAI39 / ExPEC).